The primary structure comprises 474 residues: Cysteine--tRNA ligase (474 aa).

Cys29 contacts Zn(2+). The 'HIGH' region signature appears at 31–41; sequence ITPYDHVHVGH. Residues Cys215, His240, and Glu244 each coordinate Zn(2+). The 'KMSKS' region motif lies at 273 to 277; it reads KMSKS. Lys276 contributes to the ATP binding site.

This sequence belongs to the class-I aminoacyl-tRNA synthetase family. Requires Zn(2+) as cofactor.

It is found in the cytoplasm. It catalyses the reaction tRNA(Cys) + L-cysteine + ATP = L-cysteinyl-tRNA(Cys) + AMP + diphosphate. This Pyrobaculum aerophilum (strain ATCC 51768 / DSM 7523 / JCM 9630 / CIP 104966 / NBRC 100827 / IM2) protein is Cysteine--tRNA ligase.